A 78-amino-acid chain; its full sequence is Small ribosomal subunit protein bS16c (78 aa).

This sequence belongs to the bacterial ribosomal protein bS16 family.

Its subcellular location is the plastid. The protein resides in the chloroplast. The sequence is that of Small ribosomal subunit protein bS16c from Phaeodactylum tricornutum (strain CCAP 1055/1).